A 118-amino-acid chain; its full sequence is Large ribosomal subunit protein uL18 (118 aa).

The protein belongs to the universal ribosomal protein uL18 family. As to quaternary structure, part of the 50S ribosomal subunit; part of the 5S rRNA/L5/L18/L25 subcomplex. Contacts the 5S and 23S rRNAs.

Its function is as follows. This is one of the proteins that bind and probably mediate the attachment of the 5S RNA into the large ribosomal subunit, where it forms part of the central protuberance. This chain is Large ribosomal subunit protein uL18, found in Caulobacter sp. (strain K31).